Reading from the N-terminus, the 377-residue chain is Phosphatidylglycerol--prolipoprotein diacylglyceryl transferase (377 aa).

Helical transmembrane passes span 18–38 (PVPLRAYALMIIIGIVVAVVV), 48–68 (MDPALAGEIAYWAVPFGIVGA), 93–113 (IWNGGLGIWGAIAGGALGAWL), and 119–139 (GISLALFADAAAPGIILAQAI). Arg141 serves as a coordination point for a 1,2-diacyl-sn-glycero-3-phospho-(1'-sn-glycerol). A run of 3 helical transmembrane segments spans residues 177 to 197 (QPTFLYEFLWNLVVAAILLLV), 208 to 228 (LFALYVALYTFGRLWIEMLRI), and 238 to 258 (RVNIWTSAIVCVGAVVALLVV). A disordered region spans residues 265 to 377 (DVSPQEQRAL…RTRVERPPAT (113 aa)). Composition is skewed to low complexity over residues 288 to 297 (AAGETAGETR) and 308 to 344 (GVDVNGADVDGADPSNVNGANVNGADPVNVNVNDADG).

This sequence belongs to the Lgt family.

The protein resides in the cell membrane. It carries out the reaction L-cysteinyl-[prolipoprotein] + a 1,2-diacyl-sn-glycero-3-phospho-(1'-sn-glycerol) = an S-1,2-diacyl-sn-glyceryl-L-cysteinyl-[prolipoprotein] + sn-glycerol 1-phosphate + H(+). It functions in the pathway protein modification; lipoprotein biosynthesis (diacylglyceryl transfer). Its function is as follows. Catalyzes the transfer of the diacylglyceryl group from phosphatidylglycerol to the sulfhydryl group of the N-terminal cysteine of a prolipoprotein, the first step in the formation of mature lipoproteins. This chain is Phosphatidylglycerol--prolipoprotein diacylglyceryl transferase, found in Frankia alni (strain DSM 45986 / CECT 9034 / ACN14a).